A 163-amino-acid chain; its full sequence is Nucleotide-binding protein Mflv_5248 (163 aa).

It belongs to the YajQ family.

Nucleotide-binding protein. The polypeptide is Nucleotide-binding protein Mflv_5248 (Mycolicibacterium gilvum (strain PYR-GCK) (Mycobacterium gilvum (strain PYR-GCK))).